A 322-amino-acid chain; its full sequence is Gluconeogenesis factor (322 aa).

This sequence belongs to the gluconeogenesis factor family.

The protein resides in the cytoplasm. Functionally, required for morphogenesis under gluconeogenic growth conditions. The sequence is that of Gluconeogenesis factor from Listeria innocua serovar 6a (strain ATCC BAA-680 / CLIP 11262).